A 115-amino-acid chain; its full sequence is Nitrogen regulatory protein P-II 2 (115 aa).

Tyr-54 is subject to O-UMP-tyrosine.

It belongs to the P(II) protein family.

Functionally, could be involved in the regulation of nitrogen fixation. The polypeptide is Nitrogen regulatory protein P-II 2 (Methanothermobacter thermautotrophicus (strain ATCC 29096 / DSM 1053 / JCM 10044 / NBRC 100330 / Delta H) (Methanobacterium thermoautotrophicum)).